The primary structure comprises 149 residues: Protein FAM72A (149 aa).

The protein belongs to the FAM72 family. In terms of assembly, interacts with UNG. Expressed at high levels in stomach and also in kidney and, at low levels, in heart (at protein level). In the stomach, highly expressed in foveolar cells, parietal cells and chief cells (at protein level). In kidney, expressed in endothelial cells, mesangial and epithelial cells (parietal and visceral epithelium) around glomerulus (at protein level).

It localises to the cytoplasm. The protein resides in the mitochondrion. In terms of biological role, may play a role in the regulation of cellular reactive oxygen species metabolism. May participate in cell growth regulation. The chain is Protein FAM72A (Fam72a) from Rattus norvegicus (Rat).